The following is a 356-amino-acid chain: Transmembrane protein 82 (356 aa).

8 helical membrane-spanning segments follow: residues 31–51 (LIGA…FFVA), 77–97 (LAGL…LVVL), 120–140 (LQLF…GLSF), 144–164 (GAPH…LLAL), 202–222 (LLSR…VALI), 232–250 (AVRF…VIYM), 263–283 (GQVQ…MTVG), and 285–305 (WLDL…LAGI). The segment at 331–356 (EGESGWTDPCEPRPSTPAPARSAVPS) is disordered.

This sequence belongs to the TMEM82 family.

The protein localises to the membrane. The sequence is that of Transmembrane protein 82 (Tmem82) from Mus musculus (Mouse).